The following is a 245-amino-acid chain: MANPKYKRILIKLSGEALAGERGVGIDIQTVQTIAKEIQEVHSLGIEIALVIGGGNLWRGEPAAEAGMDRVQADYTGMLGTVMNALVMADSLQQVGVDTRVQTAIAMQQVAEPYVRGRALRHLEKGRIVIFGAGIGSPYFSTDTTAALRAAEIEADAILMAKNGVDGVYNADPKKDKTAVKFEELTHRDVINKGLRIMDSTASTLSMDNDIDLVVFNMNQSGNIKRVVFGENIGTTVSNNIEEKE.

12–15 (KLSG) provides a ligand contact to ATP. The involved in allosteric activation by GTP stretch occupies residues 20–25 (GERGVG). Residue Gly54 coordinates UMP. ATP-binding residues include Gly55 and Arg59. UMP-binding positions include Asp74 and 135–142 (IGSPYFST). Asn163, Tyr169, and Asp172 together coordinate ATP.

This sequence belongs to the UMP kinase family. In terms of assembly, homohexamer.

The protein resides in the cytoplasm. The enzyme catalyses UMP + ATP = UDP + ADP. Its pathway is pyrimidine metabolism; CTP biosynthesis via de novo pathway; UDP from UMP (UMPK route): step 1/1. With respect to regulation, allosterically activated by GTP. Inhibited by UTP. Its function is as follows. Catalyzes the reversible phosphorylation of UMP to UDP. This is Uridylate kinase from Streptococcus pneumoniae serotype 2 (strain D39 / NCTC 7466).